Here is a 263-residue protein sequence, read N- to C-terminus: 4-hydroxy-2-oxo-heptane-1,7-dioate aldolase (263 aa).

The Proton acceptor role is filled by H45. Residue Q147 coordinates substrate. Position 149 (E149) interacts with a divalent metal cation. A174 and D175 together coordinate substrate. An a divalent metal cation-binding site is contributed by D175.

The protein belongs to the HpcH/HpaI aldolase family. As to quaternary structure, homohexamer; trimer of dimers. A divalent metal cation is required as a cofactor.

It catalyses the reaction 4-hydroxy-2-oxoheptanedioate = succinate semialdehyde + pyruvate. It participates in aromatic compound metabolism; 4-hydroxyphenylacetate degradation; pyruvate and succinate semialdehyde from 4-hydroxyphenylacetate: step 7/7. Its function is as follows. Catalyzes the reversible retro-aldol cleavage of 4-hydroxy-2-ketoheptane-1,7-dioate (HKHD) to pyruvate and succinic semialdehyde. This Salmonella arizonae (strain ATCC BAA-731 / CDC346-86 / RSK2980) protein is 4-hydroxy-2-oxo-heptane-1,7-dioate aldolase.